The primary structure comprises 119 residues: MEANKSMVKLVAFLIILVSSCFQSLTAQDLEIEVSDGLNVLQVHDVSQSFCPGVTKESWPELLGTPAKFAKQIIQKENPKLTNVETLLNGSAFTEDLRCNRVRLFVNLLDIVVQTPKVG.

Positions 1 to 27 (MEANKSMVKLVAFLIILVSSCFQSLTA) are cleaved as a signal peptide. Residues 28 to 48 (QDLEIEVSDGLNVLQVHDVSQ) constitute a propeptide that is removed on maturation.

It belongs to the protease inhibitor I13 (potato type I serine protease inhibitor) family.

It localises to the secreted. This Solanum lycopersicum (Tomato) protein is Ethylene-responsive proteinase inhibitor 1.